The chain runs to 471 residues: UDP-N-acetylmuramate--L-alanine ligase (471 aa).

114 to 120 (GTHGKTT) lines the ATP pocket.

Belongs to the MurCDEF family.

The protein localises to the cytoplasm. The catalysed reaction is UDP-N-acetyl-alpha-D-muramate + L-alanine + ATP = UDP-N-acetyl-alpha-D-muramoyl-L-alanine + ADP + phosphate + H(+). Its pathway is cell wall biogenesis; peptidoglycan biosynthesis. Functionally, cell wall formation. In Brucella abortus (strain S19), this protein is UDP-N-acetylmuramate--L-alanine ligase.